The following is a 109-amino-acid chain: Small ribosomal subunit protein uS10 (109 aa).

The protein belongs to the universal ribosomal protein uS10 family. Part of the 30S ribosomal subunit.

In terms of biological role, involved in the binding of tRNA to the ribosomes. This Nanoarchaeum equitans (strain Kin4-M) protein is Small ribosomal subunit protein uS10.